Here is a 416-residue protein sequence, read N- to C-terminus: MKSLLLFLKSQVFGLTVETLNGERNGDFEQQKENHGAKNVAPQGIPYQSSYYGQKEQAKRVIDGSLASNYMEGDCCHTEKQMHPWWQLDMKSKMRVHSVAITNRGDCCRERINGAEIRIGNSKKEGGLNSTRCGVVFKMNYEETLSFNCKELEGRYVTVTIPDRIEYLTLCEVQVFADPLEVDGTEASDSSESVDGTEAPASPESDVELPIASGMNVDLTNKSFMFPKESDINHVKLLPEKAMSLKAFTLCMKVLLNVPENRETILFSYRTMFYDELNLWIERDGRIGLYMSGDGIIFPRMKFKSEWNHLCLTWESKYGRTEFWLNGRRSATKVYHQKNTVRSGGIVLLGQDQDSYGGDFDKTQSFVGQIKDLKMWNKVLPLRSLKSLFKGREIGNGNIFDWSSLSYSMIGNVAEV.

Positions 1-14 are cleaved as a signal peptide; the sequence is MKSLLLFLKSQVFG. N129 carries an N-linked (GlcNAc...) asparagine glycan. A disordered region spans residues 184 to 206; sequence GTEASDSSESVDGTEAPASPESD. Positions 220–416 constitute a Pentraxin (PTX) domain; sequence TNKSFMFPKE…YSMIGNVAEV (197 aa). N221 is a glycosylation site (N-linked (GlcNAc...) asparagine). An intrachain disulfide couples C251 to C311. Positions 275, 353, 354, and 364 each coordinate Ca(2+).

It depends on Ca(2+) as a cofactor.

In Xenopus laevis (African clawed frog), this protein is Pentraxin fusion protein (pxn1).